The chain runs to 426 residues: Phytoene synthase 3, chloroplastic (426 aa).

A chloroplast-targeting transit peptide spans 1–52 (MMSTSRAVKSPACAARRRQWSADAPNRTATFLACRHGRRLGGGGGAPCSVRA).

This sequence belongs to the phytoene/squalene synthase family. Expressed in roots and endosperm.

It is found in the plastid. The protein localises to the chloroplast. The protein resides in the plastoglobule. It carries out the reaction 2 (2E,6E,10E)-geranylgeranyl diphosphate = 15-cis-phytoene + 2 diphosphate. In terms of biological role, catalyzes the conversion of geranylgeranyl diphosphate to phytoene. Mediates the first committed step in carotenoid biosynthesis. May play a role in regulating carotenoid flux in response to abiotic stress in roots. May control flux to carotenoid precursors that are required for abiotic stress-induced abscisic acid (ABA) formation in roots. The polypeptide is Phytoene synthase 3, chloroplastic (Zea mays (Maize)).